The following is a 143-amino-acid chain: MFLGTHTPKLDDKGRLTLPAKFRDALVGGLMVTKSQDHSLAVYPRAEFEQLARRASKMSRSNPEARAFLRNLAAGTDEQHPDMQGRITLSADHRRYANLSKDCVVIGAVDYLEIWDAQAWHDYQQTHEENFSAASDEALGDII.

SpoVT-AbrB domains follow at residues 5 to 47 (THTP…PRAE) and 76 to 119 (TDEQ…DAQA).

Belongs to the MraZ family. As to quaternary structure, forms oligomers.

It localises to the cytoplasm. The protein resides in the nucleoid. The protein is Transcriptional regulator MraZ of Mycobacterium leprae (strain Br4923).